Consider the following 364-residue polypeptide: Aminomethyltransferase (364 aa).

It belongs to the GcvT family. In terms of assembly, the glycine cleavage system is composed of four proteins: P, T, L and H.

The catalysed reaction is N(6)-[(R)-S(8)-aminomethyldihydrolipoyl]-L-lysyl-[protein] + (6S)-5,6,7,8-tetrahydrofolate = N(6)-[(R)-dihydrolipoyl]-L-lysyl-[protein] + (6R)-5,10-methylene-5,6,7,8-tetrahydrofolate + NH4(+). In terms of biological role, the glycine cleavage system catalyzes the degradation of glycine. The polypeptide is Aminomethyltransferase (Shigella dysenteriae serotype 1 (strain Sd197)).